The sequence spans 594 residues: Zinc finger protein 703 (594 aa).

Residues 1-14 (MSDSPAGSNPRTPE) are compositionally biased toward polar residues. Disordered regions lie at residues 1–37 (MSDS…VPAV), 100–298 (TCSQ…GHVA), and 345–370 (LVGG…LTGA). Residue serine 2 is modified to N-acetylserine. The span at 17-30 (GSGGGSSSGGGGGK) shows a compositional bias: gly residues. 3 stretches are compositionally biased toward low complexity: residues 134–145 (RSAPGAASAAAA), 177–191 (GSSS…SSSS), and 212–225 (GASV…SSPG). A compositionally biased stretch (basic and acidic residues) spans 246 to 256 (ELDKKEQEAKP). Serine 257 bears the Phosphoserine mark. Gly residues predominate over residues 345–356 (LVGGQLSGGLGL). A C2H2-type zinc finger spans residues 460-488 (HSCNWVAASGPCDKRFATSEELLSHLRTH). Arginine 584 carries the omega-N-methylarginine modification.

It belongs to the Elbow/Noc family. In terms of assembly, interacts with DCAF7 and PHB2. Interacts with TLE4; increases transcriptional repression. In terms of tissue distribution, expressed in mammary epithelium.

The protein resides in the nucleus. Its subcellular location is the cytoplasm. In terms of biological role, transcriptional corepressor which does not bind directly to DNA and may regulate transcription through recruitment of histone deacetylases to gene promoters. Regulates cell adhesion, migration and proliferation. May be required for segmental gene expression during hindbrain development. This Mus musculus (Mouse) protein is Zinc finger protein 703 (Znf703).